The sequence spans 550 residues: Zinc finger protein 426 (550 aa).

Residues 39 to 110 (VSFEDVIVDF…KIVFPEWKLQ (72 aa)) form the KRAB domain. C2H2-type zinc fingers lie at residues 219-241 (FECS…QRTH), 274-296 (HRCK…MRTH), 302-324 (YECK…GRTH), 330-352 (YVCS…VRSH), 358-380 (YGCK…IRTH), 386-408 (FVCV…LKLH), 414-436 (CECK…MRTH), 442-464 (YTCK…MRIH), 470-492 (YECK…ERTH), 498-522 (YECK…SHTH), and 528-550 (YKCQ…ERIH).

The protein resides in the nucleus. In terms of biological role, may be involved in transcriptional regulation. This is Zinc finger protein 426 (Znf426) from Mus musculus (Mouse).